Here is a 263-residue protein sequence, read N- to C-terminus: Hydroxyacylglutathione hydrolase (263 aa).

The Zn(2+) site is built by H55, H57, D59, H60, H117, D134, and H172.

Belongs to the metallo-beta-lactamase superfamily. Glyoxalase II family. As to quaternary structure, monomer. Zn(2+) is required as a cofactor.

It carries out the reaction an S-(2-hydroxyacyl)glutathione + H2O = a 2-hydroxy carboxylate + glutathione + H(+). It functions in the pathway secondary metabolite metabolism; methylglyoxal degradation; (R)-lactate from methylglyoxal: step 2/2. In terms of biological role, thiolesterase that catalyzes the hydrolysis of S-D-lactoyl-glutathione to form glutathione and D-lactic acid. The chain is Hydroxyacylglutathione hydrolase from Shewanella baltica (strain OS195).